A 566-amino-acid chain; its full sequence is Solute carrier family 2, facilitated glucose transporter member 9 (566 aa).

The tract at residues methionine 1 to arginine 31 is disordered. Over methionine 1 to aspartate 51 the chain is Cytoplasmic. Position 9 is a phosphoserine (serine 9). Residues tryptophan 52 to glycine 72 form a helical membrane-spanning segment. Residues tyrosine 73–threonine 107 lie on the Extracellular side of the membrane. N-linked (GlcNAc...) asparagine glycans are attached at residues asparagine 74 and asparagine 90. A helical transmembrane segment spans residues leucine 108 to valine 128. Residues lysine 129–threonine 140 are Cytoplasmic-facing. Residues leucine 141–alanine 161 traverse the membrane as a helical segment. At glycine 162 to arginine 171 the chain is on the extracellular side. The helical transmembrane segment at phenylalanine 172–isoleucine 192 threads the bilayer. Topologically, residues serine 193–serine 200 are cytoplasmic. A helical transmembrane segment spans residues leucine 201–leucine 221. Residues proline 222 to tryptophan 231 lie on the Extracellular side of the membrane. The chain crosses the membrane as a helical span at residues proline 232–leucine 252. Residues proline 253–valine 316 lie on the Cytoplasmic side of the membrane. A helical membrane pass occupies residues valine 317–tyrosine 337. Residues threonine 338–tyrosine 354 lie on the Extracellular side of the membrane. Residues valine 355–glutamate 375 traverse the membrane as a helical segment. Over histidine 376 to proline 381 the chain is Cytoplasmic. The chain crosses the membrane as a helical span at residues leucine 382 to threonine 402. Topologically, residues leucine 403 to isoleucine 415 are extracellular. The helical transmembrane segment at valine 416–leucine 436 threads the bilayer. The Cytoplasmic portion of the chain corresponds to threonine 437–isoleucine 451. A helical transmembrane segment spans residues isoleucine 452 to glutamine 472. Over lysine 473–tyrosine 478 the chain is Extracellular. The chain crosses the membrane as a helical span at residues cysteine 479–proline 499. Over glutamate 500–threonine 566 the chain is Cytoplasmic. Residue serine 514 is modified to Phosphoserine. Over residues glutamate 524–proline 539 the composition is skewed to basic and acidic residues. A disordered region spans residues glutamate 524–serine 543.

It belongs to the major facilitator superfamily. Sugar transporter (TC 2.A.1.1) family.

The protein resides in the basolateral cell membrane. It is found in the apical cell membrane. It carries out the reaction urate(out) = urate(in). Functionally, high-capacity urate transporter, which may play a role in the urate reabsorption by proximal tubules. May have a residual high-affinity, low-capacity glucose and fructose transporter activity. Transports urate at rates 45- to 60-fold faster than glucose. Does not transport galactose. May mediate small uptake of adenine but not of other nucleobases. This Pongo abelii (Sumatran orangutan) protein is Solute carrier family 2, facilitated glucose transporter member 9.